The chain runs to 128 residues: 3-aminoacrylate deaminase RutC (128 aa).

Belongs to the RutC family. In terms of assembly, homotrimer.

The catalysed reaction is (Z)-3-aminoacrylate + H2O + H(+) = 3-oxopropanoate + NH4(+). Its function is as follows. Involved in pyrimidine catabolism. Catalyzes the deamination of 3-aminoacrylate to malonic semialdehyde, a reaction that can also occur spontaneously. RutC may facilitate the reaction and modulate the metabolic fitness, rather than catalyzing essential functions. The protein is 3-aminoacrylate deaminase RutC of Escherichia coli O157:H7.